The sequence spans 1150 residues: Voltage-dependent calcium channel subunit alpha-2/delta-2 (1150 aa).

Residues 1-18 (MAVPARTCGASRPGPART) form the signal peptide. The disordered stretch occupies residues 1–41 (MAVPARTCGASRPGPARTARPWPGCGPHPGPGTRRPTSGPP). The Extracellular segment spans residues 19–1113 (ARPWPGCGPH…TEDTSDCGRG (1095 aa)). Residues 291–469 (DMVIIVDVSG…INTQEYLDVL (179 aa)) enclose the VWFA domain. A divalent metal cation is bound by residues D297, S299, and S301. The MIDAS-like motif signature appears at 297–301 (DVSGS). N386, N418, N507, N540, N624, and N861 each carry an N-linked (GlcNAc...) asparagine glycan. C443 and C1098 are joined by a disulfide. A Cache domain is found at 485–574 (WTNVYEDALG…KPQTTNFREP (90 aa)). A helical membrane pass occupies residues 1114–1134 (ASFPPSLGVLVSLQLLLLLGL). Over 1135-1150 (PPRPQPQVLVHASRRL) the chain is Cytoplasmic.

This sequence belongs to the calcium channel subunit alpha-2/delta family. As to quaternary structure, dimer formed of alpha-2-2 and delta-2 chains; disulfide-linked. Voltage-dependent calcium channels are multisubunit complexes, consisting of alpha-1 (CACNA1), alpha-2 (CACNA2D), beta (CACNB) and delta (CACNA2D) subunits in a 1:1:1:1 ratio. May be proteolytically processed into subunits alpha-2-2 and delta-2 that are disulfide-linked. It is however unclear whether such cleavage really takes place in vivo and has a functional role. Predominantly present in cerebellar cortex. Present in various lung tumor cell lines, while it is absent in normal lung (at protein level). Highly expressed in heart, lung, testis, pancreas and skeletal muscle. Also expressed in kidney, liver, placenta and brain.

Its subcellular location is the membrane. Its function is as follows. The alpha-2/delta subunit of voltage-dependent calcium channels regulates calcium current density and activation/inactivation kinetics of the calcium channel. Acts as a regulatory subunit for P/Q-type calcium channel (CACNA1A), N-type (CACNA1B), L-type (CACNA1C OR CACNA1D) and possibly T-type (CACNA1G). Overexpression induces apoptosis. This Homo sapiens (Human) protein is Voltage-dependent calcium channel subunit alpha-2/delta-2 (CACNA2D2).